Here is a 113-residue protein sequence, read N- to C-terminus: Large ribosomal subunit protein bL19 (113 aa).

Belongs to the bacterial ribosomal protein bL19 family.

Its function is as follows. This protein is located at the 30S-50S ribosomal subunit interface and may play a role in the structure and function of the aminoacyl-tRNA binding site. This Corynebacterium jeikeium (strain K411) protein is Large ribosomal subunit protein bL19.